The following is an 861-amino-acid chain: Probable beta-glucosidase A (861 aa).

An N-terminal signal peptide occupies residues 1-19 (MKLSILEAAALTAASVASA). 3 N-linked (GlcNAc...) asparagine glycosylation sites follow: Asn-62, Asn-212, and Asn-253. Asp-281 is a catalytic residue. Asn-316, Asn-323, Asn-355, Asn-524, Asn-543, Asn-565, Asn-669, and Asn-713 each carry an N-linked (GlcNAc...) asparagine glycan. The tract at residues 735-754 (PEGATDGSPQPRLPASGGPG) is disordered.

Belongs to the glycosyl hydrolase 3 family.

It localises to the secreted. It catalyses the reaction Hydrolysis of terminal, non-reducing beta-D-glucosyl residues with release of beta-D-glucose.. It participates in glycan metabolism; cellulose degradation. Functionally, beta-glucosidases are one of a number of cellulolytic enzymes involved in the degradation of cellulosic biomass. Catalyzes the last step releasing glucose from the inhibitory cellobiose. The polypeptide is Probable beta-glucosidase A (bglA) (Aspergillus terreus).